The chain runs to 161 residues: Nucleotide-binding protein Gmet_3206 (161 aa).

Belongs to the YajQ family.

Its function is as follows. Nucleotide-binding protein. In Geobacter metallireducens (strain ATCC 53774 / DSM 7210 / GS-15), this protein is Nucleotide-binding protein Gmet_3206.